Here is a 221-residue protein sequence, read N- to C-terminus: Abscisic acid receptor PYL1 (221 aa).

The span at 1-11 (MANSESSSSPV) shows a compositional bias: low complexity. The segment at 1-22 (MANSESSSSPVNEEENSQRIST) is disordered. At alanine 2 the chain carries N-acetylalanine. The START-like stretch occupies residues 50-206 (YQLGNGRCSS…NLQKLASITE (157 aa)). Abscisate contacts are provided by residues lysine 86, 116–121 (ANTSRE), 143–149 (RLRNYKS), and glutamate 171. The Gate loop motif lies at 112 to 116 (SGLPA). A Latch loop motif is present at residues 142 to 144 (HRL).

Belongs to the PYR/PYL/RCAR abscisic acid intracellular receptor family. As to quaternary structure, homodimer. Binds ABA on one subunit only. Interacts with HAB1, ABI1 and ABI2, and possibly with other PP2Cs. Binds to CARs protein in an ABA-independent manner, both at the plasma membrane and in the nucleus. Interacts directly with CAR1 and CAR4.

The protein resides in the cytoplasm. Its subcellular location is the nucleus. It is found in the cell membrane. Receptor for abscisic acid (ABA) required for ABA-mediated responses such as stomatal closure and germination inhibition. Inhibits the activity of group-A protein phosphatases type 2C (PP2Cs) when activated by ABA. Can be activated by both (-)-ABA and (+)-ABA. This is Abscisic acid receptor PYL1 (PYL1) from Arabidopsis thaliana (Mouse-ear cress).